Here is a 432-residue protein sequence, read N- to C-terminus: UDP-N-acetylmuramate--L-alanine ligase (432 aa).

108 to 114 contacts ATP; the sequence is GAHGKTS.

It belongs to the MurCDEF family.

It is found in the cytoplasm. It catalyses the reaction UDP-N-acetyl-alpha-D-muramate + L-alanine + ATP = UDP-N-acetyl-alpha-D-muramoyl-L-alanine + ADP + phosphate + H(+). Its pathway is cell wall biogenesis; peptidoglycan biosynthesis. Cell wall formation. This chain is UDP-N-acetylmuramate--L-alanine ligase, found in Bacillus velezensis (strain DSM 23117 / BGSC 10A6 / LMG 26770 / FZB42) (Bacillus amyloliquefaciens subsp. plantarum).